A 653-amino-acid chain; its full sequence is DNA ligase (653 aa).

NAD(+) is bound by residues 32-36 and 80-81; these read NFEYD and SL. The active-site N6-AMP-lysine intermediate is the Lys-104. Positions 125, 159, and 297 each coordinate NAD(+). Cys-386, Cys-389, Cys-406, and Cys-411 together coordinate Zn(2+). The 83-residue stretch at 571 to 653 folds into the BRCT domain; sequence GGSEKLKGLT…EEFIQLLNEA (83 aa).

The protein belongs to the NAD-dependent DNA ligase family. LigA subfamily. Mg(2+) is required as a cofactor. The cofactor is Mn(2+).

It carries out the reaction NAD(+) + (deoxyribonucleotide)n-3'-hydroxyl + 5'-phospho-(deoxyribonucleotide)m = (deoxyribonucleotide)n+m + AMP + beta-nicotinamide D-nucleotide.. Its function is as follows. DNA ligase that catalyzes the formation of phosphodiester linkages between 5'-phosphoryl and 3'-hydroxyl groups in double-stranded DNA using NAD as a coenzyme and as the energy source for the reaction. It is essential for DNA replication and repair of damaged DNA. This chain is DNA ligase, found in Lachnoclostridium phytofermentans (strain ATCC 700394 / DSM 18823 / ISDg) (Clostridium phytofermentans).